Here is an 86-residue protein sequence, read N- to C-terminus: RNA-binding protein Hfq (86 aa).

The 60-residue stretch at 9-68 (DIFLNVLRRERIQVSIYLFNGIKLQGHIESFDQFVIVLKNTISQMVYKHAVSTIVPSKFV) folds into the Sm domain.

This sequence belongs to the Hfq family. In terms of assembly, homohexamer.

Functionally, RNA chaperone that binds small regulatory RNA (sRNAs) and mRNAs to facilitate mRNA translational regulation in response to envelope stress, environmental stress and changes in metabolite concentrations. Also binds with high specificity to tRNAs. This is RNA-binding protein Hfq from Baumannia cicadellinicola subsp. Homalodisca coagulata.